Consider the following 313-residue polypeptide: MKLLLSKPRGFCAGVERAIETVEKALLLWGSPIYVKHEIVHNRHVVQGLKTKGAIFIEDVEDVPVGARLIYSAHGVSPAVREQAKKRQLIEIDATCGLVTRVHSAVKRYALQGYQIILIGHHNHVEIIGTAGEAPDVTTIVESVEDVKNLNFSSQDKLFYITQTTLSLDDVKEITQALIVKYPHVETLPSSSICYATTNRQMALREITDLTDLVLVVGDPQSSNSNRLREAASTRGIESYLINDEKEIHPEWLLGKQVIGLTAGASTPEEIVQKCIQCLIELGVNEVEDIVYTHEDVVFQLPKPIVNARFSVD.

Position 12 (C12) interacts with [4Fe-4S] cluster. The (2E)-4-hydroxy-3-methylbut-2-enyl diphosphate site is built by H41 and H74. Residues H41 and H74 each contribute to the dimethylallyl diphosphate site. Isopentenyl diphosphate contacts are provided by H41 and H74. C96 serves as a coordination point for [4Fe-4S] cluster. Residue H124 participates in (2E)-4-hydroxy-3-methylbut-2-enyl diphosphate binding. H124 contributes to the dimethylallyl diphosphate binding site. H124 contributes to the isopentenyl diphosphate binding site. The active-site Proton donor is E126. T164 is a (2E)-4-hydroxy-3-methylbut-2-enyl diphosphate binding site. C194 is a [4Fe-4S] cluster binding site. (2E)-4-hydroxy-3-methylbut-2-enyl diphosphate-binding residues include S222, S223, N224, and S266. Dimethylallyl diphosphate-binding residues include S222, S223, N224, and S266. S222, S223, N224, and S266 together coordinate isopentenyl diphosphate.

It belongs to the IspH family. It depends on [4Fe-4S] cluster as a cofactor.

It catalyses the reaction isopentenyl diphosphate + 2 oxidized [2Fe-2S]-[ferredoxin] + H2O = (2E)-4-hydroxy-3-methylbut-2-enyl diphosphate + 2 reduced [2Fe-2S]-[ferredoxin] + 2 H(+). The catalysed reaction is dimethylallyl diphosphate + 2 oxidized [2Fe-2S]-[ferredoxin] + H2O = (2E)-4-hydroxy-3-methylbut-2-enyl diphosphate + 2 reduced [2Fe-2S]-[ferredoxin] + 2 H(+). The protein operates within isoprenoid biosynthesis; dimethylallyl diphosphate biosynthesis; dimethylallyl diphosphate from (2E)-4-hydroxy-3-methylbutenyl diphosphate: step 1/1. It functions in the pathway isoprenoid biosynthesis; isopentenyl diphosphate biosynthesis via DXP pathway; isopentenyl diphosphate from 1-deoxy-D-xylulose 5-phosphate: step 6/6. Its function is as follows. Catalyzes the conversion of 1-hydroxy-2-methyl-2-(E)-butenyl 4-diphosphate (HMBPP) into a mixture of isopentenyl diphosphate (IPP) and dimethylallyl diphosphate (DMAPP). Acts in the terminal step of the DOXP/MEP pathway for isoprenoid precursor biosynthesis. The sequence is that of 4-hydroxy-3-methylbut-2-enyl diphosphate reductase from Protochlamydia amoebophila (strain UWE25).